The following is a 348-amino-acid chain: Uroporphyrinogen decarboxylase (348 aa).

Substrate contacts are provided by residues Arg-27 to Arg-31, Phe-46, Asp-76, Tyr-152, Ser-207, and His-320.

It belongs to the uroporphyrinogen decarboxylase family. In terms of assembly, homodimer.

The protein localises to the cytoplasm. It carries out the reaction uroporphyrinogen III + 4 H(+) = coproporphyrinogen III + 4 CO2. The protein operates within porphyrin-containing compound metabolism; protoporphyrin-IX biosynthesis; coproporphyrinogen-III from 5-aminolevulinate: step 4/4. Its function is as follows. Catalyzes the decarboxylation of four acetate groups of uroporphyrinogen-III to yield coproporphyrinogen-III. The protein is Uroporphyrinogen decarboxylase of Bacillus anthracis.